The primary structure comprises 786 residues: MKKRIPTLLATMIASALYSHQGLAADLASQCMLGVPSYDRPLVKGDTNDLPVTINADNAKGNYPDDAVFTGNVDIMQGNSRLQADEVQLHQKQAEGQPEPVRTVDALGNVHYDDNQVILKGPKGWANLNTKDTNVWEGDYQMVGRQGRGKADLMKQRGENRYTILENGSFTSCLPGSDTWSVVGSEVIHDREEQVAEIWNARFKVGPVPIFYSPYLQLPVGDKRRSGFLIPNAKYTTKNYFEFYLPYYWNIAPNMDATITPHYMHRRGNIMWENEFRYLTQAGEGVMELDYLPSDKVYEDDHPKEGDKHRWLFYWQHSGVMDQVWRFNVDYTKVSDSSYFNDFDSKYGSSTDGYATQKFSVGYAVQNFDATVSTKQFQVFNDQNTSSYSAEPQLDVNYYHNDLGPFDTRIYGQAVHFVNTKDNMPEATRVHLEPTINLPLSNRWGSLNTEAKLMATHYQQTNLDSYNSDPNNKNKLEDSVNRVMPQFKVDGKLIFERDMAMLAPGYTQTLEPRVQYLYVPYRDQSGIYNYDSSLLQSDYNGLFRDRTYGGLDRIASANQVTTGVTTRIYDDAAVERFNVSVGQIYYFTESRTGDDNIKWENDDKTGSLVWAGDTYWRISERWGLRSGVQYDTRLDSVATSSSSLEYRRDQDRLVQLNYRYASPEYIQATLPSYYSTAEQYKNGINQVGAVASWPIADRWSIVGAYYFDTNSSKPADQMLGLQYNSCCYAIRVGYERKLNGWDNDKQHAIYDNAIGFNIELRGLSSNYGLGTQEMLRSNILPYQSSM.

The signal sequence occupies residues 1–24; the sequence is MKKRIPTLLATMIASALYSHQGLA. Intrachain disulfides connect C31–C726 and C173–C727.

It belongs to the LptD family. As to quaternary structure, component of the lipopolysaccharide transport and assembly complex. Interacts with LptE and LptA. Post-translationally, contains two intramolecular disulfide bonds.

The protein resides in the cell outer membrane. Its function is as follows. Together with LptE, is involved in the assembly of lipopolysaccharide (LPS) at the surface of the outer membrane. This chain is LPS-assembly protein LptD, found in Salmonella typhimurium (strain LT2 / SGSC1412 / ATCC 700720).